A 452-amino-acid polypeptide reads, in one-letter code: Photoreceptor ankyrin repeat protein (452 aa).

4 ANK repeats span residues 94–123 (CRLG…SPEE), 130–160 (NGRT…DVNQ), 164–193 (GGDT…GLDL), and 223–257 (RGKT…QLSQ). Disordered stretches follow at residues 335–369 (LGTR…SPWV) and 405–427 (SKAS…QSLA). Pro residues predominate over residues 349 to 362 (APPPPLVPQSPPGS). Positions 406–424 (KASSSSHQCQPKPSPSGHQ) are enriched in polar residues.

Its subcellular location is the cytoplasm. The protein localises to the cytosol. It localises to the nucleus. Its function is as follows. Acts as a transcriptional repressor for CRX-activated photoreceptor gene regulation. The chain is Photoreceptor ankyrin repeat protein from Homo sapiens (Human).